The following is a 332-amino-acid chain: Adenosine deaminase (332 aa).

Residues H12 and H14 each coordinate Zn(2+). Substrate-binding residues include H14, D16, and G170. Zn(2+) is bound at residue H197. Catalysis depends on E200, which acts as the Proton donor. D278 serves as a coordination point for Zn(2+).

This sequence belongs to the metallo-dependent hydrolases superfamily. Adenosine and AMP deaminases family. Adenosine deaminase subfamily. Requires Zn(2+) as cofactor.

It carries out the reaction adenosine + H2O + H(+) = inosine + NH4(+). The enzyme catalyses 2'-deoxyadenosine + H2O + H(+) = 2'-deoxyinosine + NH4(+). Catalyzes the hydrolytic deamination of adenosine and 2-deoxyadenosine. This Clostridium perfringens (strain SM101 / Type A) protein is Adenosine deaminase.